The primary structure comprises 146 residues: Large ribosomal subunit protein uL15 (146 aa).

The span at 1–13 shows a compositional bias: basic and acidic residues; that stretch reads MKLHELQPAEGSR. The interval 1 to 58 is disordered; it reads MKLHELQPAEGSRKVRNRVGRGIGSGNGKTAGKGHKGQKARSGGGVRPGFEGGQNPLY. Composition is skewed to gly residues over residues 21-31 and 42-52; these read RGIGSGNGKTA and SGGGVRPGFEG.

It belongs to the universal ribosomal protein uL15 family. In terms of assembly, part of the 50S ribosomal subunit.

Binds to the 23S rRNA. The sequence is that of Large ribosomal subunit protein uL15 from Shouchella clausii (strain KSM-K16) (Alkalihalobacillus clausii).